The primary structure comprises 1140 residues: DNA damage-binding protein 1 (1140 aa).

Ser2 carries the N-acetylserine modification. Positions 2-768 (SYNYVVTAQK…QALSSSVSSS (767 aa)) are interaction with CDT1. The WD repeat beta-propeller A stretch occupies residues 13–356 (TAVNGCVTGH…VVAMETFTNL (344 aa)). Residues 391 to 708 (RNGIGIHEHA…LTIGTIDEIQ (318 aa)) are WD repeat beta-propeller B; Interaction with CUL4A. Positions 709–1043 (KLHIRTVPLY…NGMIGLVTSL (335 aa)) are WD repeat beta-propeller C. The interval 771 to 1140 (FSSSTAPHET…KVVEELTRIH (370 aa)) is interaction with CDT1 and CUL4A. Lys1067 is subject to N6-acetyllysine. Lys1121 participates in a covalent cross-link: Glycyl lysine isopeptide (Lys-Gly) (interchain with G-Cter in SUMO2). Thr1125 is subject to Phosphothreonine.

This sequence belongs to the DDB1 family. As to quaternary structure, component of the UV-DDB complex which includes DDB1 and DDB2; the heterodimer dimerizes to give rise to a heterotetramer when bound to damaged DNA. The UV-DDB complex interacts with monoubiquitinated histone H2A and binds to XPC via the DDB2 subunit. Component of numerous DCX (DDB1-CUL4-X-box) E3 ubiquitin-protein ligase complexes which consist of a core of DDB1, CUL4A or CUL4B and RBX1. DDB1 may recruit specific substrate targeting subunits to the DCX complex. These substrate targeting subunits are generally known as DCAF (DDB1- and CUL4-associated factor) or CDW (CUL4-DDB1-associated WD40-repeat) proteins. Interacts with AMBRA1, ATG16L1, BTRC, CRBN, DCAF1, DCAF4, DCAF5, DCAF6, DCAF7, DCAF8, DCAF9, DCAF10, DCAF11, DCAF12, DCAF15, DCAF16, DCAF17, DDA1, DET1, DTL, ERCC8, FBXW5, FBXW8, GRWD1, KATNB1, NLE1, NUP43, PAFAH1B1, PHIP, PWP1, RBBP4, RBBP5, RBBP7, COP1, SNRNP40, DCAF1, WDR5, WDR5B, WDR12, WDR26, WDR39, WDR42, WDR53, WDR59, WDR61, WSB1, WSB2, LRWD1 and WDTC1. DCX complexes may associate with the COP9 signalosome, and this inhibits the E3 ubiquitin-protein ligase activity of the complex. Interacts with NF2, TSC1 and TSC2. Interacts with AGO1 and AGO2. Associates with the E3 ligase complex containing DYRK2, EDD/UBR5, DDB1 and DCAF1 proteins (EDVP complex). Interacts directly with DYRK2. DCX(DTL) complex interacts with FBXO11; does not ubiquitinate and degradate FBXO11. Interacts with TRPC4AP. Interacts with CRY1 and CRY2. The DDB1-CUL4A complex interacts with CRY1. May also interact with DCUN1D1, DCUN1D2, DCUN1D3 and DCUN1D5. Component of the DCX(DCAF13) E3 ubiquitin ligase complex, at least composed of CUL4 (CUL4A or CUL4B), DDB1, DCAF13 and RBX1. Interacts with DCAF13 (via WD40 domain). In terms of processing, phosphorylated by ABL1. Ubiquitinated by CUL4A. Subsequently degraded by ubiquitin-dependent proteolysis. Post-translationally, acetylated, promoting interaction with CUL4 (CUL4A or CUL4B) and subsequent formation of DCX (DDB1-CUL4-X-box) E3 ubiquitin-protein ligase complexes. Deacetylation by SIRT7 impairs the interaction with CUL4 (CUL4A or CUL4B) and formation of DCX (DDB1-CUL4-X-box) E3 ubiquitin-protein ligase complexes.

The protein localises to the cytoplasm. The protein resides in the nucleus. It participates in protein modification; protein ubiquitination. Protein, which is both involved in DNA repair and protein ubiquitination, as part of the UV-DDB complex and DCX (DDB1-CUL4-X-box) complexes, respectively. Core component of the UV-DDB complex (UV-damaged DNA-binding protein complex), a complex that recognizes UV-induced DNA damage and recruit proteins of the nucleotide excision repair pathway (the NER pathway) to initiate DNA repair. The UV-DDB complex preferentially binds to cyclobutane pyrimidine dimers (CPD), 6-4 photoproducts (6-4 PP), apurinic sites and short mismatches. Also functions as a component of numerous distinct DCX (DDB1-CUL4-X-box) E3 ubiquitin-protein ligase complexes which mediate the ubiquitination and subsequent proteasomal degradation of target proteins. The functional specificity of the DCX E3 ubiquitin-protein ligase complex is determined by the variable substrate recognition component recruited by DDB1. DCX(DDB2) (also known as DDB1-CUL4-ROC1, CUL4-DDB-ROC1 and CUL4-DDB-RBX1) may ubiquitinate histone H2A, histone H3 and histone H4 at sites of UV-induced DNA damage. The ubiquitination of histones may facilitate their removal from the nucleosome and promote subsequent DNA repair. DCX(DDB2) also ubiquitinates XPC, which may enhance DNA-binding by XPC and promote NER. DCX(DTL) plays a role in PCNA-dependent polyubiquitination of CDT1 and MDM2-dependent ubiquitination of TP53 in response to radiation-induced DNA damage and during DNA replication. DCX(ERCC8) (the CSA complex) plays a role in transcription-coupled repair (TCR). The DDB1-CUL4A-DTL E3 ligase complex regulates the circadian clock function by mediating the ubiquitination and degradation of CRY1. DDB1-mediated CRY1 degradation promotes FOXO1 protein stability and FOXO1-mediated gluconeogenesis in the liver. By acting on TET dioxygenses, essential for oocyte maintenance at the primordial follicle stage, hence essential for female fertility. Maternal factor required for proper zygotic genome activation and genome reprogramming. The sequence is that of DNA damage-binding protein 1 (DDB1) from Bos taurus (Bovine).